A 227-amino-acid chain; its full sequence is PKHD-type hydroxylase Bamb_4192 (227 aa).

Residues 78 to 178 (KVFPPLFNRY…RVASFFWIQS (101 aa)) form the Fe2OG dioxygenase domain. H96, D98, and H159 together coordinate Fe cation. Residue R169 coordinates 2-oxoglutarate.

It depends on Fe(2+) as a cofactor. The cofactor is L-ascorbate.

This is PKHD-type hydroxylase Bamb_4192 from Burkholderia ambifaria (strain ATCC BAA-244 / DSM 16087 / CCUG 44356 / LMG 19182 / AMMD) (Burkholderia cepacia (strain AMMD)).